A 311-amino-acid polypeptide reads, in one-letter code: Aspartate carbamoyltransferase catalytic subunit (311 aa).

Carbamoyl phosphate is bound by residues arginine 55 and threonine 56. Lysine 85 contributes to the L-aspartate binding site. Carbamoyl phosphate-binding residues include arginine 106, histidine 135, and glutamine 138. L-aspartate-binding residues include arginine 168 and arginine 230. Leucine 268 and proline 269 together coordinate carbamoyl phosphate.

This sequence belongs to the aspartate/ornithine carbamoyltransferase superfamily. ATCase family. Heterododecamer (2C3:3R2) of six catalytic PyrB chains organized as two trimers (C3), and six regulatory PyrI chains organized as three dimers (R2).

It catalyses the reaction carbamoyl phosphate + L-aspartate = N-carbamoyl-L-aspartate + phosphate + H(+). It participates in pyrimidine metabolism; UMP biosynthesis via de novo pathway; (S)-dihydroorotate from bicarbonate: step 2/3. In terms of biological role, catalyzes the condensation of carbamoyl phosphate and aspartate to form carbamoyl aspartate and inorganic phosphate, the committed step in the de novo pyrimidine nucleotide biosynthesis pathway. In Salmonella paratyphi C (strain RKS4594), this protein is Aspartate carbamoyltransferase catalytic subunit.